Here is a 592-residue protein sequence, read N- to C-terminus: Pectinesterase/pectinesterase inhibitor 3 (592 aa).

The first 35 residues, 1 to 35, serve as a signal peptide directing secretion; it reads MAPSMKEIFSKDNFKKNKKLVLLSAAVALLFVAAV. A propeptide spans 36-238 (removed in mature 42 kDa form); sequence AGISAGASKA…KITSNNRKLK (203 aa). A propeptide spans 36 to 273 (removed in mature 38 kDa form); that stretch reads AGISAGASKA…WLSAGDRRLL (238 aa). The pectinesterase inhibitor 3 stretch occupies residues 53-212; sequence PSSHAVLRSS…EHMCSNALAM (160 aa). 2 N-linked (GlcNAc...) asparagine glycosylation sites follow: asparagine 96 and asparagine 215. Residues 281-578 form a pectinesterase 3 region; that stretch reads DATVAADGSG…YTAGQFIGGG (298 aa). 2 residues coordinate substrate: threonine 356 and glutamine 386. Aspartate 409 functions as the Proton donor; for pectinesterase activity in the catalytic mechanism. Residues cysteine 423 and cysteine 443 are joined by a disulfide bond. Catalysis depends on aspartate 430, which acts as the Nucleophile; for pectinesterase activity. Substrate-binding residues include glutamine 454, arginine 498, and tryptophan 500.

In the N-terminal section; belongs to the PMEI family. This sequence in the C-terminal section; belongs to the pectinesterase family. As to quaternary structure, interacts with BIIDXI and At5g11420. Binds reversibly to PMEI4, PMEI7 and PMEI8 to be inhibited; the stability of the PME3-PMEIs complexes and the inhibition of the pectin methylesterase (PME) activity is pH-dependent, based on protonation status of amino-acids at the complex interface. As to expression, expressed in roots, cotyledons, hypocotyls, seedlings, leaves, stems, flowers, dry seeds and siliques. Accumulates in etiolated hypocotyls (at protein level).

The protein localises to the secreted. It localises to the extracellular space. The protein resides in the apoplast. It is found in the cell wall. It catalyses the reaction [(1-&gt;4)-alpha-D-galacturonosyl methyl ester](n) + n H2O = [(1-&gt;4)-alpha-D-galacturonosyl](n) + n methanol + n H(+). The protein operates within glycan metabolism; pectin degradation; 2-dehydro-3-deoxy-D-gluconate from pectin: step 1/5. Regulated negatively by pectinesterase inhibitors (e.g. PMEI3, PMEI4, PMEI7 and PMEI9) in a pH-dependent manner, mainly in slightly acidic conditions (pH 6.0 and 5.0), especially in dark-grown hypocotyls; this processus relies on changes in the protonation of amino acids involved in intermolecular and intramolecular interactions. In terms of biological role, acts in the modification of cell walls via demethylesterification of cell wall pectin. Required for zinc Zn(2+) homeostasis and to monitor Zn(2+) influence on cell wall-controlled growth processes such as root cell elongation. Monitors seed germination and favors root hairs production. Prevents cruciferin seed storage proteins activity, but promotes the expression of genes involved in cell wall organization and remodeling as well as genes involved in lipid and protein metabolism, during post-germinative growth of seedlings. Confers sensitivity to Zn(2+) when overexpressed. Acts as a susceptibility factor required for the initial colonization of the host tissue by virulent pathogens including Botrytis cinerea and Pectobacterium carotovorum, probably by facilitating cell wall pectine degradation by pathogen pectic enzymes after its demethylesterification. In Arabidopsis thaliana (Mouse-ear cress), this protein is Pectinesterase/pectinesterase inhibitor 3.